A 305-amino-acid chain; its full sequence is uncharacterized protein (305 aa).

A helical membrane pass occupies residues 8-28 (IGALVTAVIAIGIVFSHMILF).

Its subcellular location is the membrane. This is an uncharacterized protein from Bacillus subtilis (strain 168).